A 113-amino-acid polypeptide reads, in one-letter code: Iron-sulfur cluster insertion protein ErpA (113 aa).

The iron-sulfur cluster site is built by Cys41, Cys105, and Cys107.

It belongs to the HesB/IscA family. As to quaternary structure, homodimer. Requires iron-sulfur cluster as cofactor.

In terms of biological role, required for insertion of 4Fe-4S clusters for at least IspG. The polypeptide is Iron-sulfur cluster insertion protein ErpA (Actinobacillus pleuropneumoniae serotype 3 (strain JL03)).